We begin with the raw amino-acid sequence, 493 residues long: MSELTALTIAEARDKLKAKAITATELTDAYLSAIDAANDAINAYVAVTHDQARSMAKASDERIAKGEAGALEGIPLGVKDLFATKGVHTQACSHILDGFKPEYESTVTANLWADGAVMLGKLNMDEFAMGSSNETSYYGPVKNPWRAKGSNADLVPGGSSGGSAAAVAAHLCAGATATDTGGSIRQPAAFTGTVGIKPTYGRVSRWGTVAFASSLDQAGPIARDVRDAAILMKSMASLDLKDTTSVDLPVPDYEAALGRSVKGMKIGIPREYRVDGMPGEIEELWQKGIQYLKDAGAEIVDISLPHTKYALPAYYIVAPAEASSNLARYDGVRYGLRVPGKDIADMYEQTRAAGFGKEVKRRIMIGTYVLSAGYYDAYYLRAQKVRTLIKKDFEDVFAKGVDAILTPATPSAAFGLADEVLANDPVKMYLNDIFTVTVNMAGLPGIAVPAGLNGQGLPLGLQLIGRPFEEETLFQAAHVIEQAAGRFTPAKWW.

Residues Lys79 and Ser159 each act as charge relay system in the active site. Catalysis depends on Ser183, which acts as the Acyl-ester intermediate.

It belongs to the amidase family. GatA subfamily. In terms of assembly, heterotrimer of A, B and C subunits.

The catalysed reaction is L-glutamyl-tRNA(Gln) + L-glutamine + ATP + H2O = L-glutaminyl-tRNA(Gln) + L-glutamate + ADP + phosphate + H(+). Its function is as follows. Allows the formation of correctly charged Gln-tRNA(Gln) through the transamidation of misacylated Glu-tRNA(Gln) in organisms which lack glutaminyl-tRNA synthetase. The reaction takes place in the presence of glutamine and ATP through an activated gamma-phospho-Glu-tRNA(Gln). This is Glutamyl-tRNA(Gln) amidotransferase subunit A from Brucella canis (strain ATCC 23365 / NCTC 10854 / RM-666).